The primary structure comprises 75 residues: MLLLAPDSVAPFEVHIKGCSSLSLHGPLGSICIMSLTLIYWLLLLWVSFHFLSLCLAIILYLLLMSTITSLHGWD.

This is an uncharacterized protein from Bovine papillomavirus type 3.